The chain runs to 567 residues: Hydrogenase-2 large chain (567 aa).

The Ni(2+) site is built by C61, C64, C546, and C549. A propeptide spanning residues 553 to 567 (VVDADGNEVVSVKVL) is cleaved from the precursor.

This sequence belongs to the [NiFe]/[NiFeSe] hydrogenase large subunit family. Heterodimer of a large and a small subunit. Ni(2+) is required as a cofactor.

The protein localises to the cell membrane. The enzyme catalyses H2 + A = AH2. This is one of three E.coli hydrogenases synthesized in response to different physiological conditions. HYD2 is involved in hydrogen uptake. In Escherichia coli O157:H7, this protein is Hydrogenase-2 large chain (hybC).